A 412-amino-acid chain; its full sequence is Phosphoglycerate kinase 1 (412 aa).

Residues 28-30 (DFN), 65-68 (HQGR), Arg-122, and Arg-162 contribute to the substrate site. ATP-binding positions include Glu-336 and 361–364 (GGHT).

It belongs to the phosphoglycerate kinase family. In terms of assembly, monomer.

It is found in the cytoplasm. The catalysed reaction is (2R)-3-phosphoglycerate + ATP = (2R)-3-phospho-glyceroyl phosphate + ADP. Its pathway is carbohydrate degradation; glycolysis; pyruvate from D-glyceraldehyde 3-phosphate: step 2/5. The polypeptide is Phosphoglycerate kinase 1 (Methanosarcina acetivorans (strain ATCC 35395 / DSM 2834 / JCM 12185 / C2A)).